We begin with the raw amino-acid sequence, 341 residues long: MVTLSPAYLPSDGGTQAASAAPSVEENWVVQPSLTLLVLLLVPCVLLLFFLNCFLLFHRLPAFSLRKRASRRKVGQYPCVRVGHSGQARLEPPYMLSPGVVLREGRLGSDTISQGFEATLALEEGVCGRQNTPQSRGSCCQGGSIPSDQICCSPRPRCATPLPCCAPRRAWNAPAYVKKRLRPKVWKVREDELGSSCELDTRHNHVPPNTPAADNALGVTPKVKFCHTSSTQRKSHVGMVPFTLGGSELLEDPSVIPREDTAEHLDASSSLPGPGLDSDFGVSAGISLHILSSDSDSGSQSWTSGMEWDYYDPCYMRRNRLRRDARHNRHLPMMCSKQYWI.

Topologically, residues 1–36 are extracellular; sequence MVTLSPAYLPSDGGTQAASAAPSVEENWVVQPSLTL. Residues 37 to 57 form a helical membrane-spanning segment; it reads LVLLLVPCVLLLFFLNCFLLF. Over 58 to 341 the chain is Cytoplasmic; it reads HRLPAFSLRK…PMMCSKQYWI (284 aa). A VPPNSP motif motif is present at residues 206-211; it reads VPPNTP.

Belongs to the huluwa family. As to quaternary structure, interacts with axin1; leading to promote the tankyrase-mediated degradation of axin. Interacts with axin2; leading to promote the tankyrase-mediated degradation of axin.

It localises to the cell membrane. Functionally, key maternal determinant of the dorsal organizer and body axis formation in vertebrates that acts by promoting stabilization of beta-catenin (ctnnb1). Localizes on the plasma membrane of the future dorsal blastomeres in early blastulas and binds to and promotes the tankyrase-mediated degradation of axin (axin1 and axin2). Axin degradation results in stabilization and nuclear translocation of beta-catenin (ctnnb1) for activating organizer-specific target gene expression. The protein is Protein huluwa of Xenopus laevis (African clawed frog).